A 485-amino-acid chain; its full sequence is Adenosylhomocysteinase (485 aa).

3 residues coordinate substrate: Thr60, Asp146, and Glu208. NAD(+) is bound at residue 209–211 (TTT). Substrate is bound by residues Lys238 and Asp242. NAD(+) is bound by residues Asn243, 272 to 277 (GYGDVG), Glu295, Asn330, 351 to 353 (IGH), and Asn399.

The protein belongs to the adenosylhomocysteinase family. Requires NAD(+) as cofactor.

It localises to the cytoplasm. The enzyme catalyses S-adenosyl-L-homocysteine + H2O = L-homocysteine + adenosine. It functions in the pathway amino-acid biosynthesis; L-homocysteine biosynthesis; L-homocysteine from S-adenosyl-L-homocysteine: step 1/1. Functionally, may play a key role in the regulation of the intracellular concentration of adenosylhomocysteine. This Streptomyces coelicolor (strain ATCC BAA-471 / A3(2) / M145) protein is Adenosylhomocysteinase.